Reading from the N-terminus, the 493-residue chain is Proline--tRNA ligase (493 aa).

Belongs to the class-II aminoacyl-tRNA synthetase family. ProS type 3 subfamily. As to quaternary structure, homodimer.

It is found in the cytoplasm. The enzyme catalyses tRNA(Pro) + L-proline + ATP = L-prolyl-tRNA(Pro) + AMP + diphosphate. Functionally, catalyzes the attachment of proline to tRNA(Pro) in a two-step reaction: proline is first activated by ATP to form Pro-AMP and then transferred to the acceptor end of tRNA(Pro). This Parabacteroides distasonis (strain ATCC 8503 / DSM 20701 / CIP 104284 / JCM 5825 / NCTC 11152) protein is Proline--tRNA ligase.